A 215-amino-acid chain; its full sequence is MTIRDRDPLEVFSNSLVPMVVEQTARGERSFDIFSRLLQERIIFLTGPVYDQVSSLICAQLLYLESVNPTKEISFYINSPGGVVSAGLAIYDTMQYIRCPVSTVCIGQAASMGSLLLAGGEKGHRYALPNARVMVHQPSGGAQGQASDIEIQAREILIIRQRLNEIYREHTGQTLEQIEQKLERDSYLSANEAREFGLIDKVVERNPHETTPDPS.

The active-site Nucleophile is the S111. H136 is a catalytic residue.

It belongs to the peptidase S14 family. As to quaternary structure, fourteen ClpP subunits assemble into 2 heptameric rings which stack back to back to give a disk-like structure with a central cavity, resembling the structure of eukaryotic proteasomes.

Its subcellular location is the cytoplasm. The enzyme catalyses Hydrolysis of proteins to small peptides in the presence of ATP and magnesium. alpha-casein is the usual test substrate. In the absence of ATP, only oligopeptides shorter than five residues are hydrolyzed (such as succinyl-Leu-Tyr-|-NHMec, and Leu-Tyr-Leu-|-Tyr-Trp, in which cleavage of the -Tyr-|-Leu- and -Tyr-|-Trp bonds also occurs).. In terms of biological role, cleaves peptides in various proteins in a process that requires ATP hydrolysis. Has a chymotrypsin-like activity. Plays a major role in the degradation of misfolded proteins. This is ATP-dependent Clp protease proteolytic subunit 1 from Gluconobacter oxydans (strain 621H) (Gluconobacter suboxydans).